Here is a 208-residue protein sequence, read N- to C-terminus: Ribosome maturation factor RimM (208 aa).

The PRC barrel domain maps to 98–205 (ADEFYVPDLI…IIEITPPDGL (108 aa)). A disordered region spans residues 154–174 (LPSKSKRSRDTKNQKKNQSPP).

The protein belongs to the RimM family. In terms of assembly, binds ribosomal protein uS19.

Its subcellular location is the cytoplasm. An accessory protein needed during the final step in the assembly of 30S ribosomal subunit, possibly for assembly of the head region. Essential for efficient processing of 16S rRNA. May be needed both before and after RbfA during the maturation of 16S rRNA. It has affinity for free ribosomal 30S subunits but not for 70S ribosomes. This is Ribosome maturation factor RimM from Trichodesmium erythraeum (strain IMS101).